An 805-amino-acid polypeptide reads, in one-letter code: Leucine--tRNA ligase (805 aa).

Residues 40–51 (PYPSGQGLHVGH) carry the 'HIGH' region motif. Positions 576–580 (KMSKS) match the 'KMSKS' region motif. Lys-579 contacts ATP.

The protein belongs to the class-I aminoacyl-tRNA synthetase family.

It is found in the cytoplasm. The enzyme catalyses tRNA(Leu) + L-leucine + ATP = L-leucyl-tRNA(Leu) + AMP + diphosphate. The protein is Leucine--tRNA ligase of Ligilactobacillus salivarius (strain UCC118) (Lactobacillus salivarius).